Reading from the N-terminus, the 129-residue chain is Small ribosomal subunit protein uS11 (129 aa).

A disordered region spans residues 107–129; the sequence is IEDVTPVPHDSIRGKGGRRGRRV.

Belongs to the universal ribosomal protein uS11 family. As to quaternary structure, part of the 30S ribosomal subunit.

Located on the platform of the 30S subunit. The chain is Small ribosomal subunit protein uS11 from Methanoculleus marisnigri (strain ATCC 35101 / DSM 1498 / JR1).